The chain runs to 214 residues: Adenylate kinase (214 aa).

Residue 10 to 15 (GAGKGT) coordinates ATP. Positions 30–59 (STGDMFRAAIKAGTELGKQAKALMDEGKLV) are NMP. AMP-binding positions include Thr31, Arg36, 57–59 (KLV), 85–88 (GFPR), and Gln92. Positions 122–159 (GRRVHQASGRSYHIVYNPPKVEGKDDVTGEDLIIRADD) are LID. ATP is bound by residues Arg123 and 132–133 (SY). Arg156 and Arg167 together coordinate AMP. Gln200 serves as a coordination point for ATP.

Belongs to the adenylate kinase family. In terms of assembly, monomer.

The protein localises to the cytoplasm. It catalyses the reaction AMP + ATP = 2 ADP. The protein operates within purine metabolism; AMP biosynthesis via salvage pathway; AMP from ADP: step 1/1. In terms of biological role, catalyzes the reversible transfer of the terminal phosphate group between ATP and AMP. Plays an important role in cellular energy homeostasis and in adenine nucleotide metabolism. It may be linked to the biosynthesis of lipopolysaccharide surface molecules, which are important for the pathogenesis of H.influenzae. The sequence is that of Adenylate kinase from Haemophilus influenzae (strain ATCC 51907 / DSM 11121 / KW20 / Rd).